Here is an 893-residue protein sequence, read N- to C-terminus: DNA mismatch repair protein MutS (893 aa).

Residue Gly-637–Ser-644 coordinates ATP.

This sequence belongs to the DNA mismatch repair MutS family.

Functionally, this protein is involved in the repair of mismatches in DNA. It is possible that it carries out the mismatch recognition step. This protein has a weak ATPase activity. The sequence is that of DNA mismatch repair protein MutS from Burkholderia thailandensis (strain ATCC 700388 / DSM 13276 / CCUG 48851 / CIP 106301 / E264).